Here is a 325-residue protein sequence, read N- to C-terminus: MSDFKTIQFVSVVIPVYNEQDSLSELLKRTIAACDSMGKQYEIVLVDDGSSDRSAEILREAAQRPGSRVVAVLLNRNYGQHSAIMAGFNHIKGDLVITLDADLQNPPEEIPRLVEAADQGYDVVGTIRQDRQDSWFRRRASRLINGLIQRTTGKSMSDYGCMLRAYRSSVIKAMLHCHERSTFIPILANSFARRTIEIPVKHAEREHGESKYGLMKLINLMYDLVTCLTTTPLRALSIFGSVVALLGFAFAVLLILMRLTLGPQWAAEGVFTLFAVLFIFIGAQFVGMGLLGEYIGRIYNDVRARPRYFIQNVVRANQPDEEQEK.

2 helical membrane-spanning segments follow: residues 236–256 and 270–290; these read LSIF…LLIL and VFTL…GMGL.

This sequence belongs to the glycosyltransferase 2 family.

It localises to the cell inner membrane. It carries out the reaction UDP-4-deoxy-4-formamido-beta-L-arabinose + di-trans,octa-cis-undecaprenyl phosphate = 4-deoxy-4-formamido-alpha-L-arabinopyranosyl di-trans,octa-cis-undecaprenyl phosphate + UDP. It functions in the pathway glycolipid biosynthesis; 4-amino-4-deoxy-alpha-L-arabinose undecaprenyl phosphate biosynthesis; 4-amino-4-deoxy-alpha-L-arabinose undecaprenyl phosphate from UDP-4-deoxy-4-formamido-beta-L-arabinose and undecaprenyl phosphate: step 1/2. Its pathway is bacterial outer membrane biogenesis; lipopolysaccharide biosynthesis. Catalyzes the transfer of 4-deoxy-4-formamido-L-arabinose from UDP to undecaprenyl phosphate. The modified arabinose is attached to lipid A and is required for resistance to polymyxin and cationic antimicrobial peptides. The protein is Undecaprenyl-phosphate 4-deoxy-4-formamido-L-arabinose transferase of Edwardsiella ictaluri (strain 93-146).